The primary structure comprises 2622 residues: Ankyrin-3 (2622 aa).

The interval 1–44 is disordered; that stretch reads MAHAASQLKKNRDLEINAEEETEKKKKHRKRSRDRKKKSDANAS. Residues 25–38 show a composition bias toward basic residues; sequence KKKHRKRSRDRKKK. Position 39 is a phosphoserine (serine 39). ANK repeat units lie at residues 73–102, 106–135, 139–168, 172–201, 203–230, 242–271, 275–304, 308–337, 341–370, 374–403, 407–436, 440–469, 473–502, 506–535, 539–568, 572–601, 605–634, 638–667, 671–700, 704–733, 737–766, 770–799, and 803–832; these read NGLNALHLASKEGHVEVVSELLQREANVDA, KGNTALHIASLAGQAEVVKVLVTNGANVNA, NGFTPLYMAAQENHLEVVRFLLDNGASQSL, DGFTPLAVALQQGHDQVVSLLLENDTKGKV, LPALHIAARKDDTKAAALLLQNDTNADI, SGFTPLHIAAHYGNINVATLLLNRAAAVDF, NDITPLHVASKRGNANMVKLLLDRGAKIDA, DGLTPLHCGARSGHEQVVEMLLDRAAPILS, NGLSPLHMATQGDHLNCVQLLLQHNVPVDD, DYLTALHVAAHCGHYKVAKVLLDKKANPNA, NGFTPLHIACKKNRIRVMELLLKHGASIQA, SGLTPIHVAAFMGHVNIVSQLMHHGASPNT, RGETALHMAARSGQAEVVRYLVQDGAQVEA, DDQTPLHISARLGKADIVQQLLQQGASPNA, SGYTPLHLSAREGHEDVAAFLLDHGASLSI, KGFTPLHVAAKYGKLEVASLLLQKSASPDA, SGLTPLHVAAHYDNQKVALLLLDQGASPHA, NGYTPLHIAAKKNQMDIATSLLEYGADANA, QGIASVHLAAQEGHVDMVSLLLSRNANVNL, SGLTPLHLAAQEDRVNVAEVLVNQGAHVDA, MGYTPLHVGCHYGNIKIVNFLLQHSAKVNA, NGYTPLHQAAQQGHTHIINVLLQNNASPNE, and NGNTALAIARRLGYISVVDTLKVVTEEIMT. The residue at position 631 (serine 631) is a Phosphoserine. Phosphoserine is present on residues valine 851, serine 855, serine 869, serine 875, serine 921, serine 924, serine 930, serine 965, serine 967, and serine 1121. Residues 868–889 form a disordered region; it reads LSDGEYISDGEEGEDAITGDTD. A compositionally biased stretch (acidic residues) spans 873–884; sequence YISDGEEGEDAI. ZU5 domains lie at 992–1147 and 1149–1296; these read FLVS…VVSR and KQES…LADC. Phosphoserine occurs at positions 1458 and 1469. A disordered region spans residues 1510–1539; that stretch reads TPITVPGPAKSGSLSSSPSNTPSASPLKSI. The span at 1515–1536 shows a compositional bias: low complexity; that stretch reads PGPAKSGSLSSSPSNTPSASPL. 7 positions are modified to phosphoserine: serine 1621, serine 1624, serine 1679, serine 1984, serine 2102, serine 2114, and serine 2117. Disordered regions lie at residues 1968-1992, 2099-2147, and 2292-2312; these read VESKGPPKSPKSDKGHSPEDDWTEF, ILES…FHEV, and SPDVAKSAAETSAQHAEKDNQ. Residues 1977–1986 are compositionally biased toward basic and acidic residues; sequence PKSDKGHSPE. Over residues 2106 to 2127 the composition is skewed to basic and acidic residues; the sequence is FSQHDQDKSPLSDSGFETRSEK. Residues 2128 to 2137 are compositionally biased toward polar residues; that stretch reads TPSAPQSAES. In terms of domain architecture, Death spans 2336–2420; sequence TDIRMAIVAD…DIVTLLEGPI (85 aa). Serine 2457, serine 2475, and serine 2544 each carry phosphoserine. The interval 2568 to 2622 is disordered; sequence CVPVGMKKMTRTPADGKARLNLQEEEGSARSEPKQGEGYKVKTKKEIRNVEKKAH. A compositionally biased stretch (basic and acidic residues) spans 2594 to 2622; the sequence is GSARSEPKQGEGYKVKTKKEIRNVEKKAH.

May be a constituent of a NFASC/NRCAM/ankyrin G complex. Interacts with RHBG. Directly interacts with DMD and betaDAG1; this interaction does not interfere with DMD-binding and is required for DMD and betaDAG1 retention at costameres. Interacts (via N-terminal ANK repeats) with SCHIP1 isoform 7 (via C-terminus); this interaction is required for the localization at axon initial segments (AISs) and nodes of Ranvier (NRs). Interacts with PLEC and FLNC. Interacts (via ANK repeats) with IQCJ-SCHIP1; required for IQCJ-SCHIP1 localization at axon initial segments (AIS) and nodes of Ranvier. Interacts with SCHIP1. Interacts with KCNA1; this inhibits channel activity. Interacts with SCN5A. Interacts with PKP2 and GJA1/CX43. In terms of assembly, interacts (via its C-terminal muscle-specific Obscurin/Titin-Binding-related domain sequence) with PLEC and FLNC. As to expression, expressed in the heart (at protein level). Expressed in skeletal muscle (at protein level). Expressed at highest levels in brain and testis, followed by skin, kidney, liver and spleen. May be specifically expressed in muscle tissues, including heart and skeletal muscle (extensor digitorum longus) (at protein level). In terms of tissue distribution, expressed in skeletal muscle, brain, lung, heart, testes and kidney.

It localises to the cytoplasm. The protein localises to the cytoskeleton. The protein resides in the cell projection. It is found in the axon. Its subcellular location is the cell membrane. It localises to the sarcolemma. The protein localises to the postsynaptic cell membrane. The protein resides in the lysosome. It is found in the T-tubule. Its function is as follows. Membrane-cytoskeleton linker. May participate in the maintenance/targeting of ion channels and cell adhesion molecules at the nodes of Ranvier and axonal initial segments. In skeletal muscle, required for costamere localization of DMD and betaDAG1. Regulates KCNA1 channel activity in function of dietary Mg(2+) levels, and thereby contributes to the regulation of renal Mg(2+) reabsorption. Required for intracellular adhesion and junctional conductance in myocytes, potentially via stabilization of GJA1/CX43 protein abundance and promotion of PKP2, GJA1/CX43, and SCN5A/Nav1.5 localization to cell-cell junctions. This Rattus norvegicus (Rat) protein is Ankyrin-3 (Ank3).